Reading from the N-terminus, the 297-residue chain is Retroviral cyclin (297 aa).

One can recognise a Cyclin N-terminal domain in the interval 21–113; that stretch reads PVYWKELLNW…KPSLLLTETM (93 aa). Residues 21 to 113 form a transcription activation domain region; it reads PVYWKELLNW…KPSLLLTETM (93 aa). A coiled-coil region spans residues 222–270; it reads QINLDFAEAEQREAAERRALLEREREQQLQEARERLDDVMAVLEAEVAI.

This sequence belongs to the cyclin family. As to quaternary structure, interacts (via transcription activation domain) with host TAF9 in vitro. Interacts with host CDK3 and CDK8.

The protein localises to the host nucleus. Functionally, transforming protein which induces the development of dermal sarcomas. Induces positive and negative regulation of transcription from host and viral promoters by interacting with various cellular factors involved in protein transcription regulation. This is Retroviral cyclin (orfA) from Sander vitreus (Walleye).